We begin with the raw amino-acid sequence, 549 residues long: Probable protein kinase UbiB (549 aa).

Positions 123-501 constitute a Protein kinase domain; sequence DFDDIPLASA…QQKAHKSNYL (379 aa). ATP is bound by residues 129-137 and Lys152; that span reads LASASISQV. The active-site Proton acceptor is the Asp287. 2 helical membrane passes run 498–518 and 520–540; these read SNYLLITSAILVICGTILINQ and ATLWPSYGSIGTGIALWVLGW.

This sequence belongs to the ABC1 family. UbiB subfamily.

The protein resides in the cell inner membrane. Its pathway is cofactor biosynthesis; ubiquinone biosynthesis [regulation]. Its function is as follows. Is probably a protein kinase regulator of UbiI activity which is involved in aerobic coenzyme Q (ubiquinone) biosynthesis. This Shewanella halifaxensis (strain HAW-EB4) protein is Probable protein kinase UbiB.